Reading from the N-terminus, the 524-residue chain is Vang-like protein 1 (524 aa).

Low complexity predominate over residues 1-15 (MDTESTYSGYSYYSS). A disordered region spans residues 1 to 85 (MDTESTYSGY…TTAITGTSEH (85 aa)). Residues 1-117 (MDTESTYSGY…KRYLGLTVAS (117 aa)) are Cytoplasmic-facing. The segment covering 73–85 (GETTTAITGTSEH) has biased composition (polar residues). Phosphoserine is present on residues Ser86 and Ser88. Residues 118–138 (FLGLLVFLTPIAFILLPPILW) form a helical membrane-spanning segment. Topologically, residues 139 to 151 (RDELEPCGTICEG) are extracellular. A helical membrane pass occupies residues 152-172 (LFISMAFKLLILLIGTWALFF). The Cytoplasmic segment spans residues 173–182 (RKRRADMPRV). The helical transmembrane segment at 183-203 (FVFRALLLVLIFLFVVSYWLF) threads the bilayer. At 204 to 222 (YGVRILDSRDRNYQGIVQY) the chain is on the extracellular side. A helical transmembrane segment spans residues 223–243 (AVSLVDALLFIHYLAIVLLEL). The Cytoplasmic portion of the chain corresponds to 244–524 (RQLQPMFTLQ…VLRLQSETSV (281 aa)).

This sequence belongs to the Vang family. Heterodimer with VANGL2. Interacts through its C-terminal region with the N-terminal half of DVL1, DVL2 and DVL3. The PDZ domain of DVL1, DVL2 and DVL3 is required for the interaction. According to PubMed:11956595, ubiquitously expressed. According to PubMed:12011995, expressed specifically in testis and ovary.

It is found in the cell membrane. This chain is Vang-like protein 1 (VANGL1), found in Homo sapiens (Human).